A 902-amino-acid polypeptide reads, in one-letter code: MSEFRIHHDVNELLSLLRVHGGDGAEVYIDLLQKNRTPYVTTTVSAHSAKVKIAEFSRTPEDFLKKYDELKSKNTRNLDPLVYLLSKLTEDKETLQYLQQNAKERAELAAAAVGSSTTSINVPAAASKISMQELEELRKQLGSVATGSTLQQSLELKRKMLRDKQNKKNSGQHLPIFPAWVYERPALIGDFLIGAGISTDTALPIGTLPLASQESAVVEDLLYVLVGVDGRYVSAQPLAGRQSRTFLVDPNLDLSIRELVHRILPVAASYSAVTRFIEEKSSFEYGQVNHALAAAMRTLVKEHLILVSQLEQLHRQGLLSLQKLWFYIQPAMRTMDILASLATSVDKGECLGGSTLSLLHDRSFSYTGDSQAQELCLYLTKAASAPYFEVLEKWIYRGIIHDPYSEFMVEEHELRKERIQEDYNDKYWDQRYTIVQQQIPSFLQKMADKILSTGKYLNVVRECGHDVTCPVAKEIIYTLKERAYVEQIEKAFNYASKVLLDFLMEEKELVAHLRSIKRYFLMDQGDFFVHFMDLAEEELRKPVEDITPPRLEALLELALRMSTANTDPFKDDLKIDLMPHDLITQLLRVLAIETKQEKAMAHADPTELALSGLEAFSFDYIVKWPLSLIINRKALTRYQMLFRHMFYCKHVERQLCSVWISNKTAKQHSLHSAQWFAGAFTLRQRMLNFVQNIQYYMMFEVMEPTWHILEKNLKSASNIDDVLGHHTGFLDTCLKDCMLTNPELLKVFSKLMSVCVMFTNCMQKFTQSMKLDGELGGQTLEHSTVLGLPAGAEERARKELARKHLAEHADTVQLVSGFEATINKFDKNFSAHLLDLLARLSIYSTSDCEHGMASVISRLDFNGFYTERLERLSAERSQKATPQVPVLRGPPAPAPRVAVTAQ.

Y83 carries the phosphotyrosine modification. The interval 874–902 (AERSQKATPQVPVLRGPPAPAPRVAVTAQ) is disordered.

This sequence belongs to the TUBGCP family. In terms of assembly, component of the gamma-tubulin ring complex (gTuRC) consisting of TUBGCP2, TUBGCP3, TUBGCP4, TUBGCP5 and TUBGCP6 and gamma-tubulin TUBG1 or TUBG2. TUBGCP2, TUBGCP3, TUBGCP4, TUBGCP5 and TUBGCP6 assemble in a 5:5:2:1:1 stoichiometry; each is associated with a gamma-tubulin, thereby arranging 14 gamma-tubulins in a helical manner. Gamma-tubulin at the first position is blocked by TUBGCP3 at the last position, allowing 13 protafilaments to grow into a microtubule. The gTuRC (via TUBGCP3 and TUBGCP6) interacts with ACTB and MZT1; the interactions form a luminal bridge that stabilizes the initial structure during complex assembly. The gTuRC (via TUBGCP2) interacts with MZT2A/MZT2B and CDK5RAP2 (via CM1 motif); the interactions play a role in gTuRC activation. Interacts with ATF5; the ATF5:PCNT:polyglutamylated tubulin (PGT) tripartite unites the mother centriole and the pericentriolar material (PCM) in the centrosome. In terms of tissue distribution, ubiquitously expressed.

It is found in the cytoplasm. The protein resides in the cytoskeleton. Its subcellular location is the microtubule organizing center. It localises to the centrosome. In terms of biological role, component of the gamma-tubulin ring complex (gTuRC) which mediates microtubule nucleation. The gTuRC regulates the minus-end nucleation of alpha-beta tubulin heterodimers that grow into microtubule protafilaments, a critical step in centrosome duplication and spindle formation. Plays a role in neuronal migration. In Homo sapiens (Human), this protein is Gamma-tubulin complex component 2 (TUBGCP2).